Reading from the N-terminus, the 238-residue chain is Uridylate kinase (238 aa).

12–15 is a binding site for ATP; that stretch reads KLSG. Position 54 (Gly-54) interacts with UMP. Gly-55 and Arg-59 together coordinate ATP. UMP contacts are provided by residues Asp-74 and 135–142; that span reads TGNPYFTT. Thr-162, Tyr-168, and Asp-171 together coordinate ATP.

It belongs to the UMP kinase family. In terms of assembly, homohexamer.

It is found in the cytoplasm. The enzyme catalyses UMP + ATP = UDP + ADP. It participates in pyrimidine metabolism; CTP biosynthesis via de novo pathway; UDP from UMP (UMPK route): step 1/1. With respect to regulation, inhibited by UTP. Its function is as follows. Catalyzes the reversible phosphorylation of UMP to UDP. The polypeptide is Uridylate kinase (Nitratidesulfovibrio vulgaris (strain ATCC 29579 / DSM 644 / CCUG 34227 / NCIMB 8303 / VKM B-1760 / Hildenborough) (Desulfovibrio vulgaris)).